Reading from the N-terminus, the 503-residue chain is Maturase K (503 aa).

The protein belongs to the intron maturase 2 family. MatK subfamily.

It is found in the plastid. The protein resides in the chloroplast. Its function is as follows. Usually encoded in the trnK tRNA gene intron. Probably assists in splicing its own and other chloroplast group II introns. The chain is Maturase K from Silene latifolia (White campion).